Consider the following 84-residue polypeptide: NAD(P)H-quinone oxidoreductase subunit O (84 aa).

It belongs to the complex I NdhO subunit family. NDH-1 can be composed of about 15 different subunits; different subcomplexes with different compositions have been identified which probably have different functions.

Its subcellular location is the cellular thylakoid membrane. It catalyses the reaction a plastoquinone + NADH + (n+1) H(+)(in) = a plastoquinol + NAD(+) + n H(+)(out). The catalysed reaction is a plastoquinone + NADPH + (n+1) H(+)(in) = a plastoquinol + NADP(+) + n H(+)(out). NDH-1 shuttles electrons from an unknown electron donor, via FMN and iron-sulfur (Fe-S) centers, to quinones in the respiratory and/or the photosynthetic chain. The immediate electron acceptor for the enzyme in this species is believed to be plastoquinone. Couples the redox reaction to proton translocation, and thus conserves the redox energy in a proton gradient. Cyanobacterial NDH-1 also plays a role in inorganic carbon-concentration. The polypeptide is NAD(P)H-quinone oxidoreductase subunit O (Synechococcus sp. (strain CC9605)).